The primary structure comprises 184 residues: Shikimate kinase (184 aa).

Residue Gly17–Thr22 participates in ATP binding. Thr21 is a binding site for Mg(2+). Substrate-binding residues include Asp39, Arg63, and Gly85. Position 123 (Arg123) interacts with ATP. Arg142 is a substrate binding site.

The protein belongs to the shikimate kinase family. As to quaternary structure, monomer. Mg(2+) serves as cofactor.

The protein localises to the cytoplasm. It catalyses the reaction shikimate + ATP = 3-phosphoshikimate + ADP + H(+). The protein operates within metabolic intermediate biosynthesis; chorismate biosynthesis; chorismate from D-erythrose 4-phosphate and phosphoenolpyruvate: step 5/7. Its function is as follows. Catalyzes the specific phosphorylation of the 3-hydroxyl group of shikimic acid using ATP as a cosubstrate. This chain is Shikimate kinase, found in Burkholderia lata (strain ATCC 17760 / DSM 23089 / LMG 22485 / NCIMB 9086 / R18194 / 383).